The chain runs to 276 residues: Large ribosomal subunit protein uL2 (276 aa).

Residues 208–276 are disordered; that stretch reads KAGRNRHRGI…KLIISRRKGK (69 aa). Over residues 230–240 the composition is skewed to basic and acidic residues; it reads DHPHGGGEGKK. Over residues 255-276 the composition is skewed to basic residues; sequence KGAKTRRKKASDKLIISRRKGK.

It belongs to the universal ribosomal protein uL2 family. In terms of assembly, part of the 50S ribosomal subunit. Forms a bridge to the 30S subunit in the 70S ribosome.

In terms of biological role, one of the primary rRNA binding proteins. Required for association of the 30S and 50S subunits to form the 70S ribosome, for tRNA binding and peptide bond formation. It has been suggested to have peptidyltransferase activity; this is somewhat controversial. Makes several contacts with the 16S rRNA in the 70S ribosome. The protein is Large ribosomal subunit protein uL2 of Campylobacter lari (strain RM2100 / D67 / ATCC BAA-1060).